The sequence spans 206 residues: MITIALPKGRIAEDTLAIFRKIFGSEFLFEDRKLILEEGNFRFLMVRNQDIPTYVTEGAADVGVVGLDVLEEHHPDVVRLLDLHIGKCRVCVGIKNDEELDYTQPELKIATKMPNIARNYFAQKATALKIIKLYGSIELAPLVGLSDAIVDVVETGSTMKQNGLKIAETIMQSSAHLIANKSSFIIKKDEILELYHKIKEQIPKTQ.

It belongs to the ATP phosphoribosyltransferase family. Short subfamily. In terms of assembly, heteromultimer composed of HisG and HisZ subunits.

It localises to the cytoplasm. It catalyses the reaction 1-(5-phospho-beta-D-ribosyl)-ATP + diphosphate = 5-phospho-alpha-D-ribose 1-diphosphate + ATP. It functions in the pathway amino-acid biosynthesis; L-histidine biosynthesis; L-histidine from 5-phospho-alpha-D-ribose 1-diphosphate: step 1/9. Catalyzes the condensation of ATP and 5-phosphoribose 1-diphosphate to form N'-(5'-phosphoribosyl)-ATP (PR-ATP). Has a crucial role in the pathway because the rate of histidine biosynthesis seems to be controlled primarily by regulation of HisG enzymatic activity. This is ATP phosphoribosyltransferase from Campylobacter curvus (strain 525.92).